The primary structure comprises 133 residues: Small ribosomal subunit protein uS8 (133 aa).

The interval methionine 1–methionine 32 is disordered. Residues asparagine 16 to threonine 25 are compositionally biased toward basic and acidic residues.

Belongs to the universal ribosomal protein uS8 family. Part of the 30S ribosomal subunit. Contacts proteins S5 and S12.

One of the primary rRNA binding proteins, it binds directly to 16S rRNA central domain where it helps coordinate assembly of the platform of the 30S subunit. This is Small ribosomal subunit protein uS8 from Synechococcus sp. (strain CC9311).